The primary structure comprises 310 residues: Acetyl-coenzyme A carboxylase carboxyl transferase subunit beta (310 aa).

The CoA carboxyltransferase N-terminal domain occupies 27-296 (LWRKCPNCEA…QDRDAEPDDT (270 aa)). C31, C34, C50, and C53 together coordinate Zn(2+). A C4-type zinc finger spans residues 31-53 (CPNCEAVLYLPELERHQSVCPKC). The tract at residues 282–310 (THQPHQDRDAEPDDTASQSTLDEFSQADH) is disordered.

The protein belongs to the AccD/PCCB family. Acetyl-CoA carboxylase is a heterohexamer composed of biotin carboxyl carrier protein (AccB), biotin carboxylase (AccC) and two subunits each of ACCase subunit alpha (AccA) and ACCase subunit beta (AccD). Zn(2+) serves as cofactor.

Its subcellular location is the cytoplasm. It catalyses the reaction N(6)-carboxybiotinyl-L-lysyl-[protein] + acetyl-CoA = N(6)-biotinyl-L-lysyl-[protein] + malonyl-CoA. It functions in the pathway lipid metabolism; malonyl-CoA biosynthesis; malonyl-CoA from acetyl-CoA: step 1/1. In terms of biological role, component of the acetyl coenzyme A carboxylase (ACC) complex. Biotin carboxylase (BC) catalyzes the carboxylation of biotin on its carrier protein (BCCP) and then the CO(2) group is transferred by the transcarboxylase to acetyl-CoA to form malonyl-CoA. This is Acetyl-coenzyme A carboxylase carboxyl transferase subunit beta from Chromohalobacter salexigens (strain ATCC BAA-138 / DSM 3043 / CIP 106854 / NCIMB 13768 / 1H11).